An 89-amino-acid polypeptide reads, in one-letter code: MKTKMSFGEALEVLKQGMQVYRSGWNGKNMFLFLKSSDALASDFGFGFGEYINEPVFGNIIFIKTADNKIHAWVPSQTDVLAEDWDIVS.

3'cADPR-binding residues include Trp-25 and Asn-26. Ser-42 contributes to the Mg(2+) binding site. The 3'cADPR site is built by Trp-73 and Asp-79.

Homotetramer.

Counteracts the host Thoeris antiviral defense system. Probably acts by binding and sequestering cyclic ADP-D-ribose signal molecules produced upon viral infection (3'cADPR or 2'cADPR); sequestration prevents the signal from activating the ThsA of the Thoeris antiviral defense system. This chain is Thoeris anti-defense 2, found in Bacillus phage SP01 (Bacteriophage SP01).